The primary structure comprises 158 residues: MNAWMILAAEAVQEAEGGLFDLDATLPLMAVQILVLVFLLNAVFYKPFGKVLDDRDQFVRGGRQDAKARLAEVKALTAQYEQELAATRKQSQALIAEAQTEAGRIAAQQLAEAQREAQAQREQAQQEIDQQKAVALQALDQQVDALSHQILDKLLARA.

Residues 24 to 44 form a helical membrane-spanning segment; the sequence is ATLPLMAVQILVLVFLLNAVF.

The protein belongs to the ATPase B chain family. In terms of assembly, F-type ATPases have 2 components, F(1) - the catalytic core - and F(0) - the membrane proton channel. F(1) has five subunits: alpha(3), beta(3), gamma(1), delta(1), epsilon(1). F(0) has four main subunits: a(1), b(1), b'(1) and c(10-14). The alpha and beta chains form an alternating ring which encloses part of the gamma chain. F(1) is attached to F(0) by a central stalk formed by the gamma and epsilon chains, while a peripheral stalk is formed by the delta, b and b' chains.

The protein resides in the cellular thylakoid membrane. Its function is as follows. F(1)F(0) ATP synthase produces ATP from ADP in the presence of a proton or sodium gradient. F-type ATPases consist of two structural domains, F(1) containing the extramembraneous catalytic core and F(0) containing the membrane proton channel, linked together by a central stalk and a peripheral stalk. During catalysis, ATP synthesis in the catalytic domain of F(1) is coupled via a rotary mechanism of the central stalk subunits to proton translocation. Component of the F(0) channel, it forms part of the peripheral stalk, linking F(1) to F(0). The b'-subunit is a diverged and duplicated form of b found in plants and photosynthetic bacteria. This Synechococcus elongatus (strain ATCC 33912 / PCC 7942 / FACHB-805) (Anacystis nidulans R2) protein is ATP synthase subunit b'.